Here is a 279-residue protein sequence, read N- to C-terminus: Energy-coupling factor transporter ATP-binding protein EcfA1 (279 aa).

The region spanning 6 to 240 is the ABC transporter domain; that stretch reads LSIEGVSFRY…GSKLERIGLD (235 aa). An ATP-binding site is contributed by 40–47; the sequence is GHNGSGKS.

Belongs to the ABC transporter superfamily. Energy-coupling factor EcfA family. As to quaternary structure, forms a stable energy-coupling factor (ECF) transporter complex composed of 2 membrane-embedded substrate-binding proteins (S component), 2 ATP-binding proteins (A component) and 2 transmembrane proteins (T component).

The protein localises to the cell membrane. Its function is as follows. ATP-binding (A) component of a common energy-coupling factor (ECF) ABC-transporter complex. Unlike classic ABC transporters this ECF transporter provides the energy necessary to transport a number of different substrates. The sequence is that of Energy-coupling factor transporter ATP-binding protein EcfA1 from Geobacillus kaustophilus (strain HTA426).